A 200-amino-acid polypeptide reads, in one-letter code: Holliday junction resolvase RecU (200 aa).

Positions 1–25 are disordered; that stretch reads MTIRYPNGKRYNQASQPHKTPIKKH. 4 residues coordinate Mg(2+): Thr-85, Asp-87, Glu-100, and Gln-119.

This sequence belongs to the RecU family. The cofactor is Mg(2+).

It localises to the cytoplasm. It carries out the reaction Endonucleolytic cleavage at a junction such as a reciprocal single-stranded crossover between two homologous DNA duplexes (Holliday junction).. Its function is as follows. Endonuclease that resolves Holliday junction intermediates in genetic recombination. Cleaves mobile four-strand junctions by introducing symmetrical nicks in paired strands. Promotes annealing of linear ssDNA with homologous dsDNA. Required for DNA repair, homologous recombination and chromosome segregation. The sequence is that of Holliday junction resolvase RecU from Bacillus thuringiensis (strain Al Hakam).